A 121-amino-acid chain; its full sequence is Ribonuclease P protein component (121 aa).

Belongs to the RnpA family. In terms of assembly, consists of a catalytic RNA component (M1 or rnpB) and a protein subunit.

It carries out the reaction Endonucleolytic cleavage of RNA, removing 5'-extranucleotides from tRNA precursor.. In terms of biological role, RNaseP catalyzes the removal of the 5'-leader sequence from pre-tRNA to produce the mature 5'-terminus. It can also cleave other RNA substrates such as 4.5S RNA. The protein component plays an auxiliary but essential role in vivo by binding to the 5'-leader sequence and broadening the substrate specificity of the ribozyme. The protein is Ribonuclease P protein component of Chromobacterium violaceum (strain ATCC 12472 / DSM 30191 / JCM 1249 / CCUG 213 / NBRC 12614 / NCIMB 9131 / NCTC 9757 / MK).